The sequence spans 322 residues: Secretion system apparatus protein SsaQ (322 aa).

This sequence belongs to the FliN/MopA/SpaO family.

Functionally, part of a type III secretion system. This is Secretion system apparatus protein SsaQ (ssaQ) from Salmonella typhimurium (strain LT2 / SGSC1412 / ATCC 700720).